Here is a 290-residue protein sequence, read N- to C-terminus: 33 kDa chaperonin (290 aa).

Cystine bridges form between Cys235/Cys237 and Cys268/Cys271.

This sequence belongs to the HSP33 family. Post-translationally, under oxidizing conditions two disulfide bonds are formed involving the reactive cysteines. Under reducing conditions zinc is bound to the reactive cysteines and the protein is inactive.

Its subcellular location is the cytoplasm. In terms of biological role, redox regulated molecular chaperone. Protects both thermally unfolding and oxidatively damaged proteins from irreversible aggregation. Plays an important role in the bacterial defense system toward oxidative stress. This is 33 kDa chaperonin from Streptococcus pneumoniae (strain CGSP14).